The chain runs to 156 residues: Ribonuclease P protein component (156 aa).

A disordered region spans residues 126-156 (GLRKLGVTPGGGRSPAPRAHSGARPRTDARS).

The protein belongs to the RnpA family. In terms of assembly, consists of a catalytic RNA component (M1 or rnpB) and a protein subunit.

It catalyses the reaction Endonucleolytic cleavage of RNA, removing 5'-extranucleotides from tRNA precursor.. In terms of biological role, RNaseP catalyzes the removal of the 5'-leader sequence from pre-tRNA to produce the mature 5'-terminus. It can also cleave other RNA substrates such as 4.5S RNA. The protein component plays an auxiliary but essential role in vivo by binding to the 5'-leader sequence and broadening the substrate specificity of the ribozyme. The polypeptide is Ribonuclease P protein component (Nocardia farcinica (strain IFM 10152)).